Here is a 1062-residue protein sequence, read N- to C-terminus: Carbamoyl phosphate synthase large chain (1062 aa).

Positions 1–401 (MPKRTDIHKI…AMQKAVRSLE (401 aa)) are carboxyphosphate synthetic domain. The ATP site is built by Arg129, Arg169, Gly175, Gly176, Lys208, Ile210, Glu215, Gly241, Ile242, His243, Gln284, and Glu298. The ATP-grasp 1 domain occupies 133 to 327 (KELCKELGEP…IAKMAAKIAI (195 aa)). The Mg(2+) site is built by Gln284, Glu298, and Asn300. Mn(2+) contacts are provided by Gln284, Glu298, and Asn300. The segment at 402 to 546 (IDEKDLYSET…YSTYDGENES (145 aa)) is oligomerization domain. Residues 547–929 (HKSGKKSVIV…ALYKAFAGAK (383 aa)) form a carbamoyl phosphate synthetic domain region. An ATP-grasp 2 domain is found at 671–861 (DQIIKKLKLN…MAQVATRVIM (191 aa)). 10 residues coordinate ATP: Arg707, Asp746, Leu748, Glu752, Gly777, Val778, His779, Ser780, Gln820, and Glu832. Residues Gln820, Glu832, and Asn834 each coordinate Mg(2+). Mn(2+)-binding residues include Gln820, Glu832, and Asn834. The 133-residue stretch at 930-1062 (MQLPENGNVL…NRSFATDALK (133 aa)) folds into the MGS-like domain. Residues 930 to 1062 (MQLPENGNVL…NRSFATDALK (133 aa)) form an allosteric domain region.

This sequence belongs to the CarB family. In terms of assembly, composed of two chains; the small (or glutamine) chain promotes the hydrolysis of glutamine to ammonia, which is used by the large (or ammonia) chain to synthesize carbamoyl phosphate. Tetramer of heterodimers (alpha,beta)4. It depends on Mg(2+) as a cofactor. Requires Mn(2+) as cofactor.

It catalyses the reaction hydrogencarbonate + L-glutamine + 2 ATP + H2O = carbamoyl phosphate + L-glutamate + 2 ADP + phosphate + 2 H(+). The enzyme catalyses hydrogencarbonate + NH4(+) + 2 ATP = carbamoyl phosphate + 2 ADP + phosphate + 2 H(+). Its pathway is amino-acid biosynthesis; L-arginine biosynthesis; carbamoyl phosphate from bicarbonate: step 1/1. It functions in the pathway pyrimidine metabolism; UMP biosynthesis via de novo pathway; (S)-dihydroorotate from bicarbonate: step 1/3. Functionally, large subunit of the glutamine-dependent carbamoyl phosphate synthetase (CPSase). CPSase catalyzes the formation of carbamoyl phosphate from the ammonia moiety of glutamine, carbonate, and phosphate donated by ATP, constituting the first step of 2 biosynthetic pathways, one leading to arginine and/or urea and the other to pyrimidine nucleotides. The large subunit (synthetase) binds the substrates ammonia (free or transferred from glutamine from the small subunit), hydrogencarbonate and ATP and carries out an ATP-coupled ligase reaction, activating hydrogencarbonate by forming carboxy phosphate which reacts with ammonia to form carbamoyl phosphate. This Lactobacillus johnsonii (strain CNCM I-12250 / La1 / NCC 533) protein is Carbamoyl phosphate synthase large chain.